The chain runs to 144 residues: UPF0306 protein Spro_0510 (144 aa).

Belongs to the UPF0306 family.

The polypeptide is UPF0306 protein Spro_0510 (Serratia proteamaculans (strain 568)).